The primary structure comprises 297 residues: Putative S-adenosyl-L-methionine-dependent methyltransferase Mjls_1072 (297 aa).

Residues D124 and 153-154 (DL) contribute to the S-adenosyl-L-methionine site.

It belongs to the UPF0677 family.

In terms of biological role, exhibits S-adenosyl-L-methionine-dependent methyltransferase activity. This chain is Putative S-adenosyl-L-methionine-dependent methyltransferase Mjls_1072, found in Mycobacterium sp. (strain JLS).